A 241-amino-acid polypeptide reads, in one-letter code: Large ribosomal subunit protein uL2 (241 aa).

Residues 201-241 form a disordered region; that stretch reads VDHPHGGGNRQHPGRPTTVSRHAPPGRKVGSIAAKRTGLKR.

This sequence belongs to the universal ribosomal protein uL2 family. As to quaternary structure, part of the 50S ribosomal subunit. Forms a bridge to the 30S subunit in the 70S ribosome.

In terms of biological role, one of the primary rRNA binding proteins. Required for association of the 30S and 50S subunits to form the 70S ribosome, for tRNA binding and peptide bond formation. It has been suggested to have peptidyltransferase activity; this is somewhat controversial. Makes several contacts with the 16S rRNA in the 70S ribosome. This chain is Large ribosomal subunit protein uL2, found in Methanobrevibacter smithii (strain ATCC 35061 / DSM 861 / OCM 144 / PS).